The chain runs to 23 residues: NADH-ubiquinone oxidoreductase 29 kDa subunit (23 aa).

Complex I is composed of about 45 different subunits.

It localises to the mitochondrion inner membrane. The enzyme catalyses a ubiquinone + NADH + 5 H(+)(in) = a ubiquinol + NAD(+) + 4 H(+)(out). Transfer of electrons from NADH to the respiratory chain. The immediate electron acceptor for the enzyme is believed to be ubiquinone. The polypeptide is NADH-ubiquinone oxidoreductase 29 kDa subunit (Solanum tuberosum (Potato)).